The sequence spans 360 residues: Carbamoyl phosphate synthase small chain (360 aa).

The segment at 1-169 is CPSase; it reads MTKRLLILED…TKTAYPAPGI (169 aa). L-glutamine is bound by residues serine 46, glycine 220, and glycine 222. Residues 172-358 form the Glutamine amidotransferase type-1 domain; the sequence is NIVLVDFGLK…LEMIDSWRCT (187 aa). The active-site Nucleophile is cysteine 247. 5 residues coordinate L-glutamine: methionine 248, glutamine 251, asparagine 289, glycine 291, and tyrosine 292. Catalysis depends on residues histidine 331 and aspartate 333.

The protein belongs to the CarA family. As to quaternary structure, composed of two chains; the small (or glutamine) chain promotes the hydrolysis of glutamine to ammonia, which is used by the large (or ammonia) chain to synthesize carbamoyl phosphate. Tetramer of heterodimers (alpha,beta)4.

It catalyses the reaction hydrogencarbonate + L-glutamine + 2 ATP + H2O = carbamoyl phosphate + L-glutamate + 2 ADP + phosphate + 2 H(+). The catalysed reaction is L-glutamine + H2O = L-glutamate + NH4(+). It functions in the pathway amino-acid biosynthesis; L-arginine biosynthesis; carbamoyl phosphate from bicarbonate: step 1/1. The protein operates within pyrimidine metabolism; UMP biosynthesis via de novo pathway; (S)-dihydroorotate from bicarbonate: step 1/3. Small subunit of the glutamine-dependent carbamoyl phosphate synthetase (CPSase). CPSase catalyzes the formation of carbamoyl phosphate from the ammonia moiety of glutamine, carbonate, and phosphate donated by ATP, constituting the first step of 2 biosynthetic pathways, one leading to arginine and/or urea and the other to pyrimidine nucleotides. The small subunit (glutamine amidotransferase) binds and cleaves glutamine to supply the large subunit with the substrate ammonia. The protein is Carbamoyl phosphate synthase small chain of Streptococcus pyogenes serotype M18 (strain MGAS8232).